We begin with the raw amino-acid sequence, 464 residues long: Neuronal acetylcholine receptor subunit beta-3 (464 aa).

The signal sequence occupies residues 1–30 (MTGFLRVFLVLSATLSGSWVTLTATAGLSS). Over 31–238 (VAEHEDALLR…VTYSFVLRRL (208 aa)) the chain is Extracellular. Residues asparagine 55 and asparagine 172 are each glycosylated (N-linked (GlcNAc...) asparagine). A disulfide bridge links cysteine 159 with cysteine 173. Transmembrane regions (helical) follow at residues 239 to 263 (PLFY…VFYL), 271 to 288 (LSLS…LLVI), and 305 to 326 (YLLF…VINV). Topologically, residues 327–434 (HHRSSSTYHP…WKFVAQVLDR (108 aa)) are cytoplasmic. A helical transmembrane segment spans residues 435–453 (IFLWLFLIASVLGSILIFI).

The protein belongs to the ligand-gated ion channel (TC 1.A.9) family. Acetylcholine receptor (TC 1.A.9.1) subfamily. Beta-3/CHRNB3 sub-subfamily. As to quaternary structure, neuronal AChR seems to be composed of two different type of subunits: alpha and beta. CHRNB3/beta-3 subunit is only able to form functional nAChRs when co-assembled with another beta subunit. Participates in pentameric assemblies along with CHRNA4/alpha-4 and CHRNB2/beta-2 subunits and with CHRNA6/alpha-6 as well, forming stoichiometries such as (CHRNA3:CHRNB4)2:CHRNB3, (CHRNA4:CHRNB2)2:CHRNB3 or (CHRNA6:CHRNB2)2:CHRNB3.

The protein localises to the synaptic cell membrane. The protein resides in the cell membrane. It catalyses the reaction Ca(2+)(in) = Ca(2+)(out). It carries out the reaction K(+)(in) = K(+)(out). The catalysed reaction is Na(+)(in) = Na(+)(out). Its activity is regulated as follows. Activated by a myriad of ligands such as acetylcholine, cytisine, nicotine, choline and epibatidine. In terms of biological role, component of neuronal acetylcholine receptors (nAChRs) that function as pentameric, ligand-gated cation channels with high calcium permeability among other activities. nAChRs are excitatory neurotrasnmitter receptors formed by a collection of nAChR subunits known to mediate synaptic transmission in the nervous system and the neuromuscular junction. Each nAchR subunit confers differential attributes to channel properties, including activation, deactivation and desensitization kinetics, pH sensitivity, cation permeability, and binding to allosteric modulators. Has an accessory rather than functional role and is only able to form functional nAChRs when co-assembled with another beta subunit. Participates in pentameric assemblies along with CHRNA3, CHRNA4, CHRNA6, CHRNB2 and CHRNB4. Modulates receptor assembly and increases receptor sensitivity to nicotine when associated with CHRNB2, CHRNA4 and/or CHRNA6 as well as CHRNA3 and CHRNB4. Seems to play a role in nicotine addiction. This Rattus norvegicus (Rat) protein is Neuronal acetylcholine receptor subunit beta-3 (Chrnb3).